Here is a 293-residue protein sequence, read N- to C-terminus: Protein PET54 (293 aa).

The protein resides in the mitochondrion inner membrane. Its function is as follows. Activator of specific mitochondrial mRNAs. PET54 is involved in the excision of intron aI5-beta from pre-mRNA for cytochrome c oxidase I (COX1) and plays a role in promoting the translation of COX3. This Saccharomyces cerevisiae (strain ATCC 204508 / S288c) (Baker's yeast) protein is Protein PET54 (PET54).